A 353-amino-acid chain; its full sequence is Inactive ADP-ribosyltransferase ARH2 (353 aa).

At serine 27 the chain carries Phosphoserine.

It belongs to the ADP-ribosylglycohydrolase family. In terms of tissue distribution, expressed in the embryonic heart at E11.5.

The protein localises to the cytoplasm. Its subcellular location is the myofibril. The protein resides in the sarcomere. Functionally, required for myofibril assembly and outgrowth of the cardiac chambers in the developing heart. Appears to be catalytically inactive, showing no activity against O-acetyl-ADP-ribose. This Mus musculus (Mouse) protein is Inactive ADP-ribosyltransferase ARH2 (Adprhl1).